Consider the following 115-residue polypeptide: Large ribosomal subunit protein uL18 (115 aa).

It belongs to the universal ribosomal protein uL18 family. In terms of assembly, part of the 50S ribosomal subunit; part of the 5S rRNA/L5/L18/L25 subcomplex. Contacts the 5S and 23S rRNAs.

In terms of biological role, this is one of the proteins that bind and probably mediate the attachment of the 5S RNA into the large ribosomal subunit, where it forms part of the central protuberance. This chain is Large ribosomal subunit protein uL18, found in Rickettsia rickettsii (strain Iowa).